A 369-amino-acid chain; its full sequence is Peptide chain release factor 2 (369 aa).

The residue at position 252 (Gln252) is an N5-methylglutamine.

This sequence belongs to the prokaryotic/mitochondrial release factor family. Post-translationally, methylated by PrmC. Methylation increases the termination efficiency of RF2.

It is found in the cytoplasm. Functionally, peptide chain release factor 2 directs the termination of translation in response to the peptide chain termination codons UGA and UAA. The polypeptide is Peptide chain release factor 2 (Staphylococcus aureus (strain MRSA252)).